A 171-amino-acid polypeptide reads, in one-letter code: MPMKGRFPIRRTLQYLGRGDVVFKESVKIMTVNYNTYGELGEGARKFVFFNIPQIQYKNPWVQIMMFKNMTPSPFLRFYLDSGEQVLVDVETKSNKEIMEHIKKILGKKEETLREEELEKQQRFHPGNFGPRKYCLRECMCEVEGQVPCPGLVPLPKEMTGKYKAALKAST.

The protein belongs to the mitochondrion-specific ribosomal protein mS25 family. In terms of assembly, component of the mitochondrial ribosome small subunit (28S) which comprises a 12S rRNA and about 30 distinct proteins.

Its subcellular location is the mitochondrion. The chain is Small ribosomal subunit protein mS25 (Mrps25) from Mus musculus (Mouse).